Here is a 428-residue protein sequence, read N- to C-terminus: Putative UPF0496 protein 5 (428 aa).

A compositionally biased stretch (basic residues) spans 1–14; sequence MGNRHGIMRPRRLA. The tract at residues 1-40 is disordered; the sequence is MGNRHGIMRPRRLASGRSAAAAEEEGEDGEGEPGSYEAAC. A compositionally biased stretch (acidic residues) spans 22–31; that stretch reads AEEEGEDGEG. 2 helical membrane-spanning segments follow: residues 229–249 and 252–272; these read IVFL…AAIA and PVAA…GKWM.

It belongs to the UPF0496 family.

The protein localises to the membrane. The sequence is that of Putative UPF0496 protein 5 from Oryza sativa subsp. indica (Rice).